A 253-amino-acid chain; its full sequence is UPF0246 protein Swit_4565 (253 aa).

The protein belongs to the UPF0246 family.

The chain is UPF0246 protein Swit_4565 from Rhizorhabdus wittichii (strain DSM 6014 / CCUG 31198 / JCM 15750 / NBRC 105917 / EY 4224 / RW1) (Sphingomonas wittichii).